The sequence spans 127 residues: Fluoride-specific ion channel FluC (127 aa).

The next 4 helical transmembrane spans lie at 4-24, 36-56, 68-88, and 98-118; these read PILA…GLGL, GTLV…AFFA, LVIT…AEIV, and WAMS…LAGI. Na(+)-binding residues include Gly75 and Ser78.

The protein belongs to the fluoride channel Fluc/FEX (TC 1.A.43) family.

The protein resides in the cell inner membrane. The enzyme catalyses fluoride(in) = fluoride(out). With respect to regulation, na(+) is not transported, but it plays an essential structural role and its presence is essential for fluoride channel function. Functionally, fluoride-specific ion channel. Important for reducing fluoride concentration in the cell, thus reducing its toxicity. The protein is Fluoride-specific ion channel FluC of Nitrosomonas europaea (strain ATCC 19718 / CIP 103999 / KCTC 2705 / NBRC 14298).